Here is a 252-residue protein sequence, read N- to C-terminus: Bidirectional sugar transporter SWEET3b (252 aa).

The Extracellular portion of the chain corresponds to 1–8 (MVSNTIRV). The helical transmembrane segment at 9–29 (AVGILGNAASMLLYAAPILTF) threads the bilayer. Residues 10 to 98 (VGILGNAASM…SIYTWFAPRE (89 aa)) enclose the MtN3/slv 1 domain. The Cytoplasmic portion of the chain corresponds to 30 to 43 (RRVIKKGSVEEFSC). A helical membrane pass occupies residues 44–64 (VPYILALFNCLLYTWYGLPVV). The Extracellular segment spans residues 65–75 (SSGWENSTVSS). Residue Asn-70 is glycosylated (N-linked (GlcNAc...) asparagine). The helical transmembrane segment at 76–96 (INGLGILLEIAFISIYTWFAP) threads the bilayer. Over 97–105 (RERKKFVLR) the chain is Cytoplasmic. Residues 106 to 126 (MVLPVLAFFALTAIFSSFLFH) form a helical membrane-spanning segment. Over 127-132 (THGLRK) the chain is Extracellular. A helical transmembrane segment spans residues 133–153 (VFVGSIGLVASISMYSSPMVA). One can recognise a MtN3/slv 2 domain in the interval 134-219 (FVGSIGLVAS…LYCIYRKSHK (86 aa)). Residues 154–167 (AKQVITTKSVEFMP) are Cytoplasmic-facing. A helical membrane pass occupies residues 168 to 188 (FYLSLFSFLSSALWMIYGLLG). The Extracellular portion of the chain corresponds to 189–190 (KD). A helical transmembrane segment spans residues 191–211 (LFIASPNFIGCPMGILQLVLY). The Cytoplasmic portion of the chain corresponds to 212 to 252 (CIYRKSHKEAEKLHDIDQENGLKVVTTHEKITGREPEAQRD).

The protein belongs to the SWEET sugar transporter family. Forms homooligomers and/or heterooligomers.

The protein resides in the cell membrane. Functionally, mediates both low-affinity uptake and efflux of sugar across the plasma membrane. In Oryza sativa subsp. japonica (Rice), this protein is Bidirectional sugar transporter SWEET3b (SWEET3B).